The chain runs to 112 residues: Nucleoid-associated protein lpp2803 (112 aa).

The protein belongs to the YbaB/EbfC family. Homodimer.

The protein resides in the cytoplasm. It localises to the nucleoid. In terms of biological role, binds to DNA and alters its conformation. May be involved in regulation of gene expression, nucleoid organization and DNA protection. This Legionella pneumophila (strain Paris) protein is Nucleoid-associated protein lpp2803.